The chain runs to 364 residues: Ribosomal RNA large subunit methyltransferase M (364 aa).

Residues serine 198, 231–234 (APGG), aspartate 250, aspartate 270, and aspartate 286 each bind S-adenosyl-L-methionine. The active-site Proton acceptor is lysine 315.

It belongs to the class I-like SAM-binding methyltransferase superfamily. RNA methyltransferase RlmE family. RlmM subfamily. As to quaternary structure, monomer.

Its subcellular location is the cytoplasm. The catalysed reaction is cytidine(2498) in 23S rRNA + S-adenosyl-L-methionine = 2'-O-methylcytidine(2498) in 23S rRNA + S-adenosyl-L-homocysteine + H(+). Its function is as follows. Catalyzes the 2'-O-methylation at nucleotide C2498 in 23S rRNA. The polypeptide is Ribosomal RNA large subunit methyltransferase M (Azoarcus sp. (strain BH72)).